The following is a 348-amino-acid chain: Dihydroorotase (348 aa).

Positions 17 and 19 each coordinate Zn(2+). Residues 19 to 21 and Asn-45 contribute to the substrate site; that span reads HLR. Residues Lys-103, His-140, and His-178 each coordinate Zn(2+). Lys-103 is modified (N6-carboxylysine). Position 140 (His-140) interacts with substrate. Leu-223 serves as a coordination point for substrate. Residue Asp-251 participates in Zn(2+) binding. The active site involves Asp-251. 2 residues coordinate substrate: His-255 and Ala-267.

This sequence belongs to the metallo-dependent hydrolases superfamily. DHOase family. Class II DHOase subfamily. In terms of assembly, homodimer. Zn(2+) serves as cofactor.

It catalyses the reaction (S)-dihydroorotate + H2O = N-carbamoyl-L-aspartate + H(+). It participates in pyrimidine metabolism; UMP biosynthesis via de novo pathway; (S)-dihydroorotate from bicarbonate: step 3/3. Catalyzes the reversible cyclization of carbamoyl aspartate to dihydroorotate. In Klebsiella pneumoniae (strain 342), this protein is Dihydroorotase.